Consider the following 568-residue polypeptide: Matrix metalloproteinase-21 (568 aa).

The N-terminal stretch at 1-24 (MLAASVLRLTLPLCWLVAPQPTQP) is a signal peptide. The propeptide occupies 25–143 (ERLFHSRDRS…SLGLRPRARQ (119 aa)). Residues 110–117 (PRCGVPDT) carry the Cysteine switch motif. Positions 112 and 282 each coordinate Zn(2+). The active site involves Glu283. Zn(2+)-binding residues include His286 and His292. A disulfide bridge connects residues Cys328 and Cys559. 4 Hemopexin repeats span residues 329 to 388 (KGSF…WRGI), 390 to 446 (TQSI…FPGI), 447 to 495 (PSPL…FPAI), and 502 to 558 (FRNL…WFDV). Asn371 carries an N-linked (GlcNAc...) asparagine glycan.

It belongs to the peptidase M10A family. Zn(2+) serves as cofactor. Ca(2+) is required as a cofactor. The precursor is cleaved by a furin endopeptidase.

It localises to the secreted. Plays a specialized role in the generation of left-right asymmetry during embryogenesis. May act as a negative regulator of the NOTCH-signaling pathway. Cleaves alpha-1-antitrypsin. In Mus musculus (Mouse), this protein is Matrix metalloproteinase-21 (Mmp21).